A 450-amino-acid chain; its full sequence is Phosphoglucosamine mutase (450 aa).

The active-site Phosphoserine intermediate is the Ser-101. Positions 101, 240, 242, and 244 each coordinate Mg(2+). Position 101 is a phosphoserine (Ser-101).

This sequence belongs to the phosphohexose mutase family. It depends on Mg(2+) as a cofactor. Post-translationally, activated by phosphorylation.

The enzyme catalyses alpha-D-glucosamine 1-phosphate = D-glucosamine 6-phosphate. Catalyzes the conversion of glucosamine-6-phosphate to glucosamine-1-phosphate. The sequence is that of Phosphoglucosamine mutase from Streptococcus pneumoniae (strain Hungary19A-6).